Here is a 126-residue protein sequence, read N- to C-terminus: Chemocyanin (126 aa).

The N-terminal stretch at 1-30 (MAQGSGSAERALVLGVVLVFLVFNCEVAES) is a signal peptide. Residues 31 to 126 (VVYTVGDGGG…GGLKIAVTAA (96 aa)) enclose the Phytocyanin domain. Cu cation contacts are provided by His-69, Cys-109, and His-114. A disulfide bridge links Cys-82 with Cys-115.

As to expression, strongly expressed in stigma and style and to a lesser extent in leaves, ovary and petals. Not detected in pollen tubes, mature anthers or roots.

In terms of biological role, diffusible chemotropic factor that induces pollen tube chemotropism. This Lilium longiflorum (Trumpet lily) protein is Chemocyanin.